The following is a 237-amino-acid chain: Ribonuclease PH (237 aa).

Residues Arg86 and Gly124 to Arg126 contribute to the phosphate site.

It belongs to the RNase PH family. In terms of assembly, homohexameric ring arranged as a trimer of dimers.

It catalyses the reaction tRNA(n+1) + phosphate = tRNA(n) + a ribonucleoside 5'-diphosphate. In terms of biological role, phosphorolytic 3'-5' exoribonuclease that plays an important role in tRNA 3'-end maturation. Removes nucleotide residues following the 3'-CCA terminus of tRNAs; can also add nucleotides to the ends of RNA molecules by using nucleoside diphosphates as substrates, but this may not be physiologically important. Probably plays a role in initiation of 16S rRNA degradation (leading to ribosome degradation) during starvation. The protein is Ribonuclease PH of Coxiella burnetii (strain RSA 331 / Henzerling II).